A 528-amino-acid chain; its full sequence is Xylose import ATP-binding protein XylG (528 aa).

2 consecutive ABC transporter domains span residues 6–245 and 262–507; these read LQMN…VGRE and FEAR…LSHP. ATP is bound at residue 38–45; that stretch reads GENGAGKS. A disordered region spans residues 504–528; it reads LSHPGDPDSNDPANNNHNDNDRKTT.

Belongs to the ABC transporter superfamily. Xylose importer (TC 3.A.1.2.4) family. In terms of assembly, the complex is composed of two ATP-binding proteins (XylG), two transmembrane proteins (XylH) and a solute-binding protein (XylF).

Its subcellular location is the cell inner membrane. The catalysed reaction is D-xylose(out) + ATP + H2O = D-xylose(in) + ADP + phosphate + H(+). Part of the ABC transporter complex XylFGH involved in xylose import. Responsible for energy coupling to the transport system. The polypeptide is Xylose import ATP-binding protein XylG (Pseudomonas syringae pv. tomato (strain ATCC BAA-871 / DC3000)).